We begin with the raw amino-acid sequence, 255 residues long: Pyrroloquinoline-quinone synthase (255 aa).

The protein belongs to the PqqC family.

It catalyses the reaction 6-(2-amino-2-carboxyethyl)-7,8-dioxo-1,2,3,4,7,8-hexahydroquinoline-2,4-dicarboxylate + 3 O2 = pyrroloquinoline quinone + 2 H2O2 + 2 H2O + H(+). It functions in the pathway cofactor biosynthesis; pyrroloquinoline quinone biosynthesis. In terms of biological role, ring cyclization and eight-electron oxidation of 3a-(2-amino-2-carboxyethyl)-4,5-dioxo-4,5,6,7,8,9-hexahydroquinoline-7,9-dicarboxylic-acid to PQQ. In Cereibacter sphaeroides (strain ATCC 17023 / DSM 158 / JCM 6121 / CCUG 31486 / LMG 2827 / NBRC 12203 / NCIMB 8253 / ATH 2.4.1.) (Rhodobacter sphaeroides), this protein is Pyrroloquinoline-quinone synthase.